The primary structure comprises 242 residues: Anamorsin homolog (242 aa).

The tract at residues 1–140 (MMNFADTLVI…NVTAENPDFL (140 aa)) is N-terminal SAM-like domain. A disordered region spans residues 140-159 (LSNEDDNDEHSSDGEAHENA). Residues 141–162 (SNEDDNDEHSSDGEAHENAEDN) are linker. The segment covering 148–159 (EHSSDGEAHENA) has biased composition (basic and acidic residues). Positions 205, 208, 216, and 219 each coordinate [4Fe-4S] cluster. Short sequence motifs (cx2C motif) lie at residues 205–208 (CGNC) and 216–219 (CASC). Residues 205–219 (CGNCYLGDAFRCASC) form a fe-S binding site B region.

The protein belongs to the anamorsin family. As to quaternary structure, monomer. Requires [4Fe-4S] cluster as cofactor.

Its subcellular location is the cytoplasm. It localises to the mitochondrion intermembrane space. Functionally, component of the cytosolic iron-sulfur (Fe-S) protein assembly (CIA) machinery. Required for the maturation of extramitochondrial Fe-S proteins. Part of an electron transfer chain functioning in an early step of cytosolic Fe-S biogenesis, facilitating the de novo assembly of a [4Fe-4S] cluster on the cytosolic Fe-S scaffold complex. Electrons are transferred from NADPH via a FAD- and FMN-containing diflavin oxidoreductase. Together with the diflavin oxidoreductase, also required for the assembly of the diferric tyrosyl radical cofactor of ribonucleotide reductase (RNR), probably by providing electrons for reduction during radical cofactor maturation in the catalytic small subunit. In Plasmodium vivax (strain Salvador I), this protein is Anamorsin homolog.